The primary structure comprises 399 residues: Galactokinase (399 aa).

E42–D45 is a substrate binding site. ATP is bound by residues S76 and A133–S139. Mg(2+) contacts are provided by S139 and E171. D183 functions as the Proton acceptor in the catalytic mechanism. Y233 contacts substrate.

It belongs to the GHMP kinase family. GalK subfamily. Monomer.

The protein resides in the cytoplasm. The enzyme catalyses alpha-D-galactose + ATP = alpha-D-galactose 1-phosphate + ADP + H(+). Its pathway is carbohydrate metabolism; galactose metabolism. In terms of biological role, catalyzes the transfer of the gamma-phosphate of ATP to D-galactose to form alpha-D-galactose-1-phosphate (Gal-1-P). The protein is Galactokinase of Lactococcus lactis subsp. lactis (strain IL1403) (Streptococcus lactis).